The chain runs to 679 residues: Glycine--tRNA ligase beta subunit (679 aa).

Belongs to the class-II aminoacyl-tRNA synthetase family. Tetramer of two alpha and two beta subunits.

It is found in the cytoplasm. It catalyses the reaction tRNA(Gly) + glycine + ATP = glycyl-tRNA(Gly) + AMP + diphosphate. The chain is Glycine--tRNA ligase beta subunit from Streptococcus pyogenes serotype M6 (strain ATCC BAA-946 / MGAS10394).